The following is a 291-amino-acid chain: START domain-containing protein 10 (291 aa).

The residue at position 1 (methionine 1) is an N-acetylmethionine. A disordered region spans residues 1-23 (MEKPAASTEPQGSRPALGRESVQ). In terms of domain architecture, START spans 14 to 224 (RPALGRESVQ…MYKACIKYPE (211 aa)). Lysine 94, lysine 197, and lysine 202 each carry N6-succinyllysine. Phosphoserine occurs at positions 253, 259, 284, and 289. Positions 260–291 (LENIDESAVTESREERAGGAGGEGSDDDTSLT) are disordered.

Post-translationally, phosphorylation at Ser-284 by CK2 negatively regulates lipid transfer activity, possibly by decreasing membrane association. In terms of tissue distribution, testis, kidney, liver, and intestine with the highest level in the testis.

Its subcellular location is the cell projection. It localises to the cilium. The protein resides in the flagellum. It is found in the cytoplasm. The protein localises to the membrane. In terms of biological role, phospholipid transfer protein that preferentially selects lipid species containing a palmitoyl or stearoyl chain on the sn-1 and an unsaturated fatty acyl chain (18:1 or 18:2) on the sn-2 position. Able to transfer phosphatidylcholine (PC) and phosphatidyetanolamline (PE) between membranes. May play metabolic roles in sperm maturation or fertilization. In Mus musculus (Mouse), this protein is START domain-containing protein 10 (Stard10).